The following is a 288-amino-acid chain: UPF0761 membrane protein HS_0693 (288 aa).

A run of 6 helical transmembrane segments spans residues 36–56, 92–112, 127–147, 176–196, 200–220, and 240–260; these read TLAL…FPVF, QMSA…IHSI, PAIF…IVIA, LLSL…YMVV, KVSI…FTLG, and AMAT…AVLL.

This sequence belongs to the UPF0761 family.

Its subcellular location is the cell inner membrane. The polypeptide is UPF0761 membrane protein HS_0693 (Histophilus somni (strain 129Pt) (Haemophilus somnus)).